Reading from the N-terminus, the 356-residue chain is MRVMLPNKKALEIIRKYMKIYNGKNEKDIKERLIKELKEEHVLVETEDGTYTLKAEDEEEMMHSKVGALKEAIYKFAKPSKITDLSNPRVLDLCSGMGYNAIAALHYNKNAEIDMVEICEEVLFLTLFLDIPYKEHEIIKDKVREYFLNKIGIEYKSDYDNINLYVGDARKFIIKSDKKYNVVFHDAFSPKRDPTLYTYDFLKEIYKRMEDNGVLISYSSAIPFRSALVDCGFVISEKESVGRKRGITLAYKNPNFKPNRINEVDERVIALSVIALPYRDETLSLTKDKIIEDREERREKLKEKLIKIGKYLSTKQIKKGNIPEEILKIQKEDLNSSEIIKKMRLKFFKDANIFIL.

This is an uncharacterized protein from Methanocaldococcus jannaschii (strain ATCC 43067 / DSM 2661 / JAL-1 / JCM 10045 / NBRC 100440) (Methanococcus jannaschii).